The following is a 316-amino-acid chain: PHD finger protein 20-like protein 1 (316 aa).

The region spanning 11–71 (ITFEIGARLE…SNRLRPLERP (61 aa)) is the Tudor 1 domain. Glycyl lysine isopeptide (Lys-Gly) (interchain with G-Cter in SUMO2) cross-links involve residues K75 and K79. Positions 85 to 141 (FDFKAGEEVLARWTDCRYYPAKIEAINKEGTFTVQFYDGVIRCLKRMHIKAMPEDAK) constitute a Tudor 2 domain. Positions 183–237 (AKNKTGNKPRTSANSNKDKEKDERKWFKVPSKKEETSTSITTPEVEKKEDLPTSS) are disordered. A compositionally biased stretch (polar residues) spans 186-197 (KTGNKPRTSANS). Positions 198-218 (NKDKEKDERKWFKVPSKKEET) are enriched in basic and acidic residues.

As to quaternary structure, interacts with methylated DNMT1 (DNMT1K142me1). Interacts with SOX2.

It is found in the nucleus. Its function is as follows. Is a negative regulator of proteasomal degradation of a set of methylated proteins, including DNMT1 and SOX2. Involved in the maintainance of embryonic stem cells pluripotency, through the regulation of SOX2 levels. The sequence is that of PHD finger protein 20-like protein 1 (PHF20L1) from Bos taurus (Bovine).